We begin with the raw amino-acid sequence, 316 residues long: Serpentine receptor class gamma-4 (316 aa).

Transmembrane regions (helical) follow at residues 21–41, 50–70, 99–121, 140–160, 188–208, 229–249, and 258–278; these read FVYL…IWGT, SFFT…FLDV, IVYP…LSIN, MKKV…NVII, FQII…SITL, TAWI…FAFF, and IFYI…PIVM.

This sequence belongs to the nematode receptor-like protein srg family.

It is found in the membrane. This is Serpentine receptor class gamma-4 (srg-4) from Caenorhabditis elegans.